Here is a 352-residue protein sequence, read N- to C-terminus: Biotin synthase (352 aa).

Residues 44 to 262 (NRVQVSTLLS…LAVARILMPK (219 aa)) form the Radical SAM core domain. Cysteine 59, cysteine 63, and cysteine 66 together coordinate [4Fe-4S] cluster. The [2Fe-2S] cluster site is built by cysteine 103, cysteine 134, cysteine 194, and arginine 266.

The protein belongs to the radical SAM superfamily. Biotin synthase family. Homodimer. [4Fe-4S] cluster is required as a cofactor. It depends on [2Fe-2S] cluster as a cofactor.

It carries out the reaction (4R,5S)-dethiobiotin + (sulfur carrier)-SH + 2 reduced [2Fe-2S]-[ferredoxin] + 2 S-adenosyl-L-methionine = (sulfur carrier)-H + biotin + 2 5'-deoxyadenosine + 2 L-methionine + 2 oxidized [2Fe-2S]-[ferredoxin]. The protein operates within cofactor biosynthesis; biotin biosynthesis; biotin from 7,8-diaminononanoate: step 2/2. Functionally, catalyzes the conversion of dethiobiotin (DTB) to biotin by the insertion of a sulfur atom into dethiobiotin via a radical-based mechanism. The chain is Biotin synthase from Pseudomonas syringae pv. syringae (strain B728a).